The following is a 191-amino-acid chain: Peptidyl-tRNA hydrolase (191 aa).

TRNA is bound at residue Tyr-15. His-20 (proton acceptor) is an active-site residue. Residues Phe-66, Asn-68, and Asn-114 each contribute to the tRNA site.

It belongs to the PTH family. Monomer.

The protein resides in the cytoplasm. The catalysed reaction is an N-acyl-L-alpha-aminoacyl-tRNA + H2O = an N-acyl-L-amino acid + a tRNA + H(+). Hydrolyzes ribosome-free peptidyl-tRNAs (with 1 or more amino acids incorporated), which drop off the ribosome during protein synthesis, or as a result of ribosome stalling. In terms of biological role, catalyzes the release of premature peptidyl moieties from peptidyl-tRNA molecules trapped in stalled 50S ribosomal subunits, and thus maintains levels of free tRNAs and 50S ribosomes. This is Peptidyl-tRNA hydrolase from Streptococcus agalactiae serotype III (strain NEM316).